A 189-amino-acid chain; its full sequence is GTP cyclohydrolase 1 (189 aa).

Positions 78, 81, and 150 each coordinate Zn(2+).

Belongs to the GTP cyclohydrolase I family. In terms of assembly, homomer.

The enzyme catalyses GTP + H2O = 7,8-dihydroneopterin 3'-triphosphate + formate + H(+). The protein operates within cofactor biosynthesis; 7,8-dihydroneopterin triphosphate biosynthesis; 7,8-dihydroneopterin triphosphate from GTP: step 1/1. This is GTP cyclohydrolase 1 from Lysinibacillus sphaericus (strain C3-41).